A 513-amino-acid polypeptide reads, in one-letter code: MAIRSKAWISLLLALAVALSARAEEEPAAAAEGEAVLTLDVDSFDEAVAKHPFMVVEFYAPWCGHCKKLAPEYENAAKALSKHDPPIVLAKVDANEEKNRPLATKYEIQGFPTIKIFRDRGKNIQEYKGPREADGIVDYLKKQVGPASKEIKSPEDATALIDDKKIYIVGIFAEFSGTEFTNFMEVAEKLRSDYDFGHTLHANHLPRGDAAVERPLVRLLKPFDELVVDSKDFDVAALMKFIDASTIPRVVTFDKNPDNHPYLMKFFQSSAPKAMLFLNFSTGPFDSFKSAYSAAAEEFKDKEIKFLIGDIEASQGAFQYFGLKEDQTPLILIQDGDSKKFLKVHVEADQIVAWLKEYFDGKLTPFRNSEPIPEVNNEPVKVVVADNVHDFVFKSGKNVLIEFYAPWCGHCKKLAPILDEAATTLQSDEEVVIAKMDATANDVPSEFDVQGYPTLYFVTPSGKVTSYDSGRTADDIVDFIKKSKETAAPHHHHHPGATGIREGSRAEPVKDEL.

A signal peptide spans Met-1 to Ala-23. The Thioredoxin 1 domain occupies Glu-24 to Gly-145. Residues Cys-63 and Cys-66 each act as nucleophile in the active site. Cys-63 and Cys-66 are joined by a disulfide. Residue Asn-279 is glycosylated (N-linked (GlcNAc...) asparagine). The Thioredoxin 2 domain occupies Phe-366–Glu-485. Active-site nucleophile residues include Cys-408 and Cys-411. A disulfide bridge links Cys-408 with Cys-411. The segment at Glu-485–Leu-513 is disordered. The span at Glu-502–Leu-513 shows a compositional bias: basic and acidic residues. The Prevents secretion from ER motif lies at Lys-510–Leu-513.

It belongs to the protein disulfide isomerase family.

The protein localises to the endoplasmic reticulum lumen. The catalysed reaction is Catalyzes the rearrangement of -S-S- bonds in proteins.. Participates in the folding of proteins containing disulfide bonds, may be involved in glycosylation, prolyl hydroxylation and triglyceride transfer. The polypeptide is Protein disulfide-isomerase (PDI) (Zea mays (Maize)).